The following is a 931-amino-acid chain: Protein translocase subunit SecA (931 aa).

ATP contacts are provided by residues Q87, 105-109 (GEGKT), and D515. Positions 915, 917, 926, and 927 each coordinate Zn(2+).

The protein belongs to the SecA family. Monomer and homodimer. Part of the essential Sec protein translocation apparatus which comprises SecA, SecYEG and auxiliary proteins SecDF-YajC and YidC. Zn(2+) is required as a cofactor.

The protein resides in the cell inner membrane. The protein localises to the cytoplasm. The catalysed reaction is ATP + H2O + cellular proteinSide 1 = ADP + phosphate + cellular proteinSide 2.. Functionally, part of the Sec protein translocase complex. Interacts with the SecYEG preprotein conducting channel. Has a central role in coupling the hydrolysis of ATP to the transfer of proteins into and across the cell membrane, serving both as a receptor for the preprotein-SecB complex and as an ATP-driven molecular motor driving the stepwise translocation of polypeptide chains across the membrane. This Burkholderia ambifaria (strain MC40-6) protein is Protein translocase subunit SecA.